The primary structure comprises 267 residues: tRNA (guanine-N(1)-)-methyltransferase (267 aa).

S-adenosyl-L-methionine-binding positions include Gly-112 and 131-136; that span reads IGDYIL. Basic and acidic residues predominate over residues 245–259; that stretch reads DRRKEKNSYEDEFNR. The tract at residues 245–267 is disordered; sequence DRRKEKNSYEDEFNRRNYKRSTS.

This sequence belongs to the RNA methyltransferase TrmD family. In terms of assembly, homodimer.

It localises to the cytoplasm. It catalyses the reaction guanosine(37) in tRNA + S-adenosyl-L-methionine = N(1)-methylguanosine(37) in tRNA + S-adenosyl-L-homocysteine + H(+). In terms of biological role, specifically methylates guanosine-37 in various tRNAs. The polypeptide is tRNA (guanine-N(1)-)-methyltransferase (Spiroplasma kunkelii).